The chain runs to 195 residues: ATP-dependent Clp protease proteolytic subunit 1 (195 aa).

Residue serine 96 is the Nucleophile of the active site. The active site involves histidine 121.

Belongs to the peptidase S14 family. In terms of assembly, fourteen ClpP subunits assemble into 2 heptameric rings which stack back to back to give a disk-like structure with a central cavity, resembling the structure of eukaryotic proteasomes.

The protein resides in the cytoplasm. It catalyses the reaction Hydrolysis of proteins to small peptides in the presence of ATP and magnesium. alpha-casein is the usual test substrate. In the absence of ATP, only oligopeptides shorter than five residues are hydrolyzed (such as succinyl-Leu-Tyr-|-NHMec, and Leu-Tyr-Leu-|-Tyr-Trp, in which cleavage of the -Tyr-|-Leu- and -Tyr-|-Trp bonds also occurs).. Cleaves peptides in various proteins in a process that requires ATP hydrolysis. Has a chymotrypsin-like activity. Plays a major role in the degradation of misfolded proteins. The polypeptide is ATP-dependent Clp protease proteolytic subunit 1 (Prochlorococcus marinus (strain MIT 9312)).